The primary structure comprises 175 residues: NADH-ubiquinone oxidoreductase chain 6 (175 aa).

Helical transmembrane passes span M1 to S21, P25 to G45, L51 to I71, V87 to F107, E112 to F132, and Y148 to I168.

This sequence belongs to the complex I subunit 6 family. As to quaternary structure, core subunit of respiratory chain NADH dehydrogenase (Complex I) which is composed of 45 different subunits.

The protein localises to the mitochondrion inner membrane. The catalysed reaction is a ubiquinone + NADH + 5 H(+)(in) = a ubiquinol + NAD(+) + 4 H(+)(out). Functionally, core subunit of the mitochondrial membrane respiratory chain NADH dehydrogenase (Complex I) which catalyzes electron transfer from NADH through the respiratory chain, using ubiquinone as an electron acceptor. Essential for the catalytic activity and assembly of complex I. This chain is NADH-ubiquinone oxidoreductase chain 6 (MT-ND6), found in Loxodonta africana (African elephant).